The following is a 513-amino-acid chain: Lysine--tRNA ligase (513 aa).

The Mg(2+) site is built by Glu423 and Glu430.

It belongs to the class-II aminoacyl-tRNA synthetase family. In terms of assembly, homodimer. Mg(2+) serves as cofactor.

Its subcellular location is the cytoplasm. The enzyme catalyses tRNA(Lys) + L-lysine + ATP = L-lysyl-tRNA(Lys) + AMP + diphosphate. The protein is Lysine--tRNA ligase of Anaeromyxobacter dehalogenans (strain 2CP-C).